We begin with the raw amino-acid sequence, 208 residues long: Urease accessory protein UreG 2 (208 aa).

A GTP-binding site is contributed by 16–23 (GPVGSGKT).

The protein belongs to the SIMIBI class G3E GTPase family. UreG subfamily. As to quaternary structure, homodimer. UreD, UreF and UreG form a complex that acts as a GTP-hydrolysis-dependent molecular chaperone, activating the urease apoprotein by helping to assemble the nickel containing metallocenter of UreC. The UreE protein probably delivers the nickel.

The protein resides in the cytoplasm. In terms of biological role, facilitates the functional incorporation of the urease nickel metallocenter. This process requires GTP hydrolysis, probably effectuated by UreG. The chain is Urease accessory protein UreG 2 from Methylobacterium radiotolerans (strain ATCC 27329 / DSM 1819 / JCM 2831 / NBRC 15690 / NCIMB 10815 / 0-1).